The following is a 390-amino-acid chain: MGSLQAMRRAQRAQGPATIMAVGTSNPPNLYEQTSYPDFYFRVTNSDHKHALKNKFRVICEKTKVKRRYLHLTEEILKQRPKLCSYMEPSFDDRQDIVVEEIPKLAKEAAEKAIKEWGRPKSEITHLVFCSISGIDMPGADYRLATLLGLPLSVNRLMLYSQACHMGAQMLRIAKDLAENNRGARVLAVSCEITVLSFRGPDAGDFEALACQAGFGDGAAAVVVGADPLPGVERPIYEIAAAMQETVPESERAVGGHLREIGWTFHFFNQLPKLIAENIEGSLARAFKPLGISEWNDVFWVAHPGNWGIMDAIETKLGLEQGKLATARHVFSEYGNMQSATVYFVMDEVRKRSAAEGRATTGEGLEWGVLFGFGPGLTIETVVLRSVPLP.

Cys-164 is an active-site residue.

This sequence belongs to the thiolase-like superfamily. Chalcone/stilbene synthases family. As to quaternary structure, homodimer.

It catalyses the reaction (E)-feruloylacetyl-CoA + (E)-feruloyl-CoA + H2O = curcumin + CO2 + 2 CoA. The catalysed reaction is (E)-feruloylacetyl-CoA + (E)-4-coumaroyl-CoA + H2O = demethoxycurcumin + CO2 + 2 CoA. The enzyme catalyses (4-coumaroyl)acetyl-CoA + 4-coumaroyl-CoA + H2O = bisdemethoxycurcumin + CO2 + 2 CoA. The protein operates within secondary metabolite biosynthesis; flavonoid biosynthesis. In terms of biological role, catalyzes the synthesis of curcumin by condensing feruloyl-CoA with a diketide-CoA in the curcuminoid biosynthesis. Also acts as a demethoxycurcumin synthase by accepting 4-coumaroyl-CoA as a starter substrate instead of feruloyl-CoA. The chain is Curcumin synthase 3 (CURS3) from Curcuma longa (Turmeric).